The sequence spans 317 residues: Enoyl-CoA delta isomerase 3, peroxisomal (317 aa).

An ACB domain is found at Met1–Ala46. Residues Leu40 to Glu60 form a disordered region. Residue Ser120–Leu124 coordinates substrate. The Microbody targeting signal motif lies at Ala315–Leu317.

The protein belongs to the enoyl-CoA hydratase/isomerase family. As to expression, expressed at high levels in the kidney. Also detected at very low levels in the duodenum, jejunum, ileum, heart, liver, lung, and brown adipose tissue (at protein level). In the kidney, expression seems to be localized mainly to the proximal tubule.

The protein localises to the peroxisome. It catalyses the reaction a (3Z)-enoyl-CoA = a 4-saturated (2E)-enoyl-CoA. The catalysed reaction is a (3E)-enoyl-CoA = a 4-saturated (2E)-enoyl-CoA. It carries out the reaction (3E)-nonenoyl-CoA = (2E)-nonenoyl-CoA. In terms of biological role, catalyzes the isomerization of trans-3-nonenoyl-CoA into trans-2-nonenoyl-CoA. May also have activity towards other enoyl-CoA species. The polypeptide is Enoyl-CoA delta isomerase 3, peroxisomal (Mus musculus (Mouse)).